We begin with the raw amino-acid sequence, 370 residues long: Selenide, water dikinase 2 (370 aa).

Residue Sec24 is part of the active site. Residue Sec24 is a non-standard amino acid, selenocysteine. ATP contacts are provided by residues Lys27, 55 to 57 (GMD), Asp76, and Asp99. Asp57 provides a ligand contact to Mg(2+). 2 residues coordinate Mg(2+): Asp99 and Asp258.

This sequence belongs to the selenophosphate synthase 1 family. Class I subfamily. As to quaternary structure, homodimer. The cofactor is Mg(2+). First expressed in the midgut anlagen with subsequent expression in a variety of tissues including the gut and nervous system.

The enzyme catalyses hydrogenselenide + ATP + H2O = selenophosphate + AMP + phosphate + 2 H(+). Functionally, synthesizes selenophosphate from selenide and ATP. The chain is Selenide, water dikinase 2 (Sps2) from Drosophila melanogaster (Fruit fly).